The following is a 260-amino-acid chain: MTYLDKILEHKRKEIEALKPQNFKKQFESQAENLPAPRDFAAALRRKAPSEPLRLIAELKKASPSRGVMVHDFKPLEIAERYRTLGASAYSVLTDEEFFQGHANYLKAVRENFDLPVLRKDFIIDESQIYEARLLGADALLLIVAALSPEALLQFRELAESLGMSALVEVHSKPELDIAVACGATIIGVNNRDLRTFKVNIQTSVELFASYPNDVIAVSESGIKTPEDLQQLADAGFDAVLIGEGLITSERLAAYGWNEK.

This sequence belongs to the TrpC family.

It carries out the reaction 1-(2-carboxyphenylamino)-1-deoxy-D-ribulose 5-phosphate + H(+) = (1S,2R)-1-C-(indol-3-yl)glycerol 3-phosphate + CO2 + H2O. Its pathway is amino-acid biosynthesis; L-tryptophan biosynthesis; L-tryptophan from chorismate: step 4/5. The protein is Indole-3-glycerol phosphate synthase of Chloroherpeton thalassium (strain ATCC 35110 / GB-78).